The primary structure comprises 805 residues: DNA gyrase subunit B (805 aa).

Residues 431–546 form the Toprim domain; it reads CEMYIVEGDS…NECVYIAQPP (116 aa). Mg(2+) contacts are provided by Glu-437, Asp-511, and Asp-513.

It belongs to the type II topoisomerase GyrB family. In terms of assembly, heterotetramer, composed of two GyrA and two GyrB chains. In the heterotetramer, GyrA contains the active site tyrosine that forms a transient covalent intermediate with DNA, while GyrB binds cofactors and catalyzes ATP hydrolysis. The cofactor is Mg(2+). Requires Mn(2+) as cofactor. Ca(2+) serves as cofactor.

It is found in the cytoplasm. It carries out the reaction ATP-dependent breakage, passage and rejoining of double-stranded DNA.. In terms of biological role, a type II topoisomerase that negatively supercoils closed circular double-stranded (ds) DNA in an ATP-dependent manner to modulate DNA topology and maintain chromosomes in an underwound state. Negative supercoiling favors strand separation, and DNA replication, transcription, recombination and repair, all of which involve strand separation. Also able to catalyze the interconversion of other topological isomers of dsDNA rings, including catenanes and knotted rings. Type II topoisomerases break and join 2 DNA strands simultaneously in an ATP-dependent manner. The sequence is that of DNA gyrase subunit B from Chlamydia pneumoniae (Chlamydophila pneumoniae).